Here is a 261-residue protein sequence, read N- to C-terminus: Kallikrein 1-related peptidase b8 (261 aa).

Positions 1-18 are cleaved as a signal peptide; that stretch reads MRFLILFLALSLGGIDAA. Residues 19-24 constitute a propeptide, activation peptide; sequence PPLQSR. The Peptidase S1 domain occupies 25 to 258; the sequence is VVGGFNCEKN…FNSWIKDTMT (234 aa). 5 disulfide bridges follow: Cys-31-Cys-173, Cys-50-Cys-66, Cys-152-Cys-219, Cys-184-Cys-198, and Cys-209-Cys-234. Catalysis depends on His-65, which acts as the Charge relay system. An N-linked (GlcNAc...) asparagine glycan is attached at Asn-102. Asp-120 serves as the catalytic Charge relay system. Residue Ser-213 is the Charge relay system of the active site.

Belongs to the peptidase S1 family. Kallikrein subfamily.

The enzyme catalyses Preferential cleavage of Arg-|-Xaa bonds in small molecule substrates. Highly selective action to release kallidin (lysyl-bradykinin) from kininogen involves hydrolysis of Met-|-Xaa or Leu-|-Xaa.. Glandular kallikreins cleave Met-Lys and Arg-Ser bonds in kininogen to release Lys-bradykinin. In Mus musculus (Mouse), this protein is Kallikrein 1-related peptidase b8 (Klk1b8).